The sequence spans 603 residues: Elongation factor 4 (603 aa).

Residues 7-189 enclose the tr-type G domain; that stretch reads SRIRNFSIIA…SIVHLVPPPE (183 aa). GTP-binding positions include 19–24 and 136–139; these read DHGKST and NKID.

The protein belongs to the TRAFAC class translation factor GTPase superfamily. Classic translation factor GTPase family. LepA subfamily.

The protein resides in the cell inner membrane. The catalysed reaction is GTP + H2O = GDP + phosphate + H(+). Functionally, required for accurate and efficient protein synthesis under certain stress conditions. May act as a fidelity factor of the translation reaction, by catalyzing a one-codon backward translocation of tRNAs on improperly translocated ribosomes. Back-translocation proceeds from a post-translocation (POST) complex to a pre-translocation (PRE) complex, thus giving elongation factor G a second chance to translocate the tRNAs correctly. Binds to ribosomes in a GTP-dependent manner. The sequence is that of Elongation factor 4 from Acaryochloris marina (strain MBIC 11017).